The following is a 153-amino-acid chain: Large-conductance mechanosensitive channel (153 aa).

2 helical membrane-spanning segments follow: residues 16–36 (VIDLAVGVVIGGAFGSIVKSL) and 88–108 (GLFINALVSFTIVAFAIFMLV).

This sequence belongs to the MscL family. As to quaternary structure, homopentamer.

The protein localises to the cell inner membrane. Channel that opens in response to stretch forces in the membrane lipid bilayer. May participate in the regulation of osmotic pressure changes within the cell. The sequence is that of Large-conductance mechanosensitive channel from Chromobacterium violaceum (strain ATCC 12472 / DSM 30191 / JCM 1249 / CCUG 213 / NBRC 12614 / NCIMB 9131 / NCTC 9757 / MK).